Here is a 688-residue protein sequence, read N- to C-terminus: Polyphosphate kinase (688 aa).

Asparagine 45 provides a ligand contact to ATP. Positions 375 and 405 each coordinate Mg(2+). Residues 430-464 (PGLKIHAKLFLISRKENGEVVRYAHIGTGNFNEKT) enclose the PLD phosphodiesterase domain. Histidine 435 serves as the catalytic Phosphohistidine intermediate. 3 residues coordinate ATP: tyrosine 468, arginine 564, and histidine 592.

The protein belongs to the polyphosphate kinase 1 (PPK1) family. Mg(2+) serves as cofactor. An intermediate of this reaction is the autophosphorylated ppk in which a phosphate is covalently linked to a histidine residue through a N-P bond.

It catalyses the reaction [phosphate](n) + ATP = [phosphate](n+1) + ADP. In terms of biological role, catalyzes the reversible transfer of the terminal phosphate of ATP to form a long-chain polyphosphate (polyP). The sequence is that of Polyphosphate kinase from Escherichia coli O157:H7.